The chain runs to 336 residues: tRNA N6-adenosine threonylcarbamoyltransferase (336 aa).

2 residues coordinate Fe cation: histidine 111 and histidine 115. Substrate-binding positions include 134–138 (LVSGG), aspartate 167, glycine 180, and asparagine 270. Aspartate 298 contacts Fe cation.

This sequence belongs to the KAE1 / TsaD family. It depends on Fe(2+) as a cofactor.

It localises to the cytoplasm. The enzyme catalyses L-threonylcarbamoyladenylate + adenosine(37) in tRNA = N(6)-L-threonylcarbamoyladenosine(37) in tRNA + AMP + H(+). Required for the formation of a threonylcarbamoyl group on adenosine at position 37 (t(6)A37) in tRNAs that read codons beginning with adenine. Is involved in the transfer of the threonylcarbamoyl moiety of threonylcarbamoyl-AMP (TC-AMP) to the N6 group of A37, together with TsaE and TsaB. TsaD likely plays a direct catalytic role in this reaction. The protein is tRNA N6-adenosine threonylcarbamoyltransferase of Acinetobacter baumannii (strain AB307-0294).